Here is a 551-residue protein sequence, read N- to C-terminus: Inosine-5'-monophosphate dehydrogenase (551 aa).

CBS domains lie at 102–163 (FILD…PLSE) and 165–221 (MTSD…PLAS). Residues 258 to 260 (DSS) and 308 to 310 (GMG) contribute to the NAD(+) site. 2 residues coordinate K(+): G310 and G312. Residue S313 coordinates IMP. C315 is a K(+) binding site. The active-site Thioimidate intermediate is C315. Residues 349–351 (DGG), 372–373 (GS), and 396–400 (YRGMG) contribute to the IMP site. Positions 407–462 (AGTRRTASPPARGLRSPEASPSTAASSGGASRASALSEASPSAKSEASRTSTSTGS) are disordered. Over residues 422 to 462 (SPEASPSTAASSGGASRASALSEASPSAKSEASRTSTSTGS) the composition is skewed to low complexity. The active-site Proton acceptor is the R465. Residue Q477 participates in IMP binding. K(+)-binding residues include E536 and G537.

Belongs to the IMPDH/GMPR family. As to quaternary structure, homotetramer. K(+) serves as cofactor.

It is found in the cytoplasm. The catalysed reaction is IMP + NAD(+) + H2O = XMP + NADH + H(+). It functions in the pathway purine metabolism; XMP biosynthesis via de novo pathway; XMP from IMP: step 1/1. With respect to regulation, mycophenolic acid (MPA) is a non-competitive inhibitor that prevents formation of the closed enzyme conformation by binding to the same site as the amobile flap. In contrast, mizoribine monophosphate (MZP) is a competitive inhibitor that induces the closed conformation. MPA is a potent inhibitor of mammalian IMPDHs but a poor inhibitor of the bacterial enzymes. MZP is a more potent inhibitor of bacterial IMPDH. Potently inhibited by MPA and adenine dinucleotide analogs such as thiazole-4-carboxamide adenine dinucleotide (TAD). Catalyzes the conversion of inosine 5'-phosphate (IMP) to xanthosine 5'-phosphate (XMP), the first committed and rate-limiting step in the de novo synthesis of guanine nucleotides, and therefore plays an important role in the regulation of cell growth. The chain is Inosine-5'-monophosphate dehydrogenase from Toxoplasma gondii.